The chain runs to 332 residues: Fructose-1,6-bisphosphatase class 1 (332 aa).

Positions 89, 110, 112, and 113 each coordinate Mg(2+). Substrate-binding positions include D113 to S116, N206, Y239, Y257 to Y259, and K269. A Mg(2+)-binding site is contributed by E275.

It belongs to the FBPase class 1 family. In terms of assembly, homotetramer. Mg(2+) serves as cofactor.

It localises to the cytoplasm. The enzyme catalyses beta-D-fructose 1,6-bisphosphate + H2O = beta-D-fructose 6-phosphate + phosphate. Its pathway is carbohydrate biosynthesis; gluconeogenesis. This chain is Fructose-1,6-bisphosphatase class 1, found in Salmonella typhi.